A 310-amino-acid chain; its full sequence is tRNA pseudouridine synthase B (310 aa).

The active-site Nucleophile is the Asp49.

The protein belongs to the pseudouridine synthase TruB family. Type 1 subfamily.

It catalyses the reaction uridine(55) in tRNA = pseudouridine(55) in tRNA. Responsible for synthesis of pseudouridine from uracil-55 in the psi GC loop of transfer RNAs. The polypeptide is tRNA pseudouridine synthase B (Sinorhizobium medicae (strain WSM419) (Ensifer medicae)).